The sequence spans 333 residues: Cap-specific mRNA (nucleoside-2'-O-)-methyltransferase (333 aa).

Position 22 (tyrosine 22) interacts with mRNA. 8 residues coordinate S-adenosyl-L-methionine: glutamine 39, tyrosine 66, glycine 68, glycine 72, aspartate 95, arginine 97, valine 116, and aspartate 138. Positions 169–249 (PVASSLKWRC…NKIVRNKVVV (81 aa)) are binding to NPH-I. The tract at residues 169-333 (PVASSLKWRC…NSKRSVRSNK (165 aa)) is binding to Rap94. Residue lysine 175 is the For methyltransferase activity of the active site. Residues 177–180 (RCPF), aspartate 182, 205–207 (SAE), and glutamate 233 contribute to the mRNA site. Residues 305–333 (SHEPIQRKISSKNSMSKNRNSKRSVRSNK) are disordered. Positions 311 to 322 (RKISSKNSMSKN) are enriched in low complexity. Over residues 323-333 (RNSKRSVRSNK) the composition is skewed to basic residues.

The protein belongs to the class I-like SAM-binding methyltransferase superfamily. Poxvirus/kinetoplastid 2'-O-MTase family. In terms of assembly, interacts with poly(A) polymerase catalytic subunit OPG063. Interacts with OPG109 and OPG123; these interactions might help linking transcription to capping and polyadenylation.

The protein localises to the virion. It carries out the reaction a 5'-end (N(7)-methyl 5'-triphosphoguanosine)-ribonucleoside in mRNA + S-adenosyl-L-methionine = a 5'-end (N(7)-methyl 5'-triphosphoguanosine)-(2'-O-methyl-ribonucleoside) in mRNA + S-adenosyl-L-homocysteine + H(+). In terms of biological role, displays methyltransferase, positive regulation of the poly(A) polymerase and transcription elongation activities. Involved in the modification of both mRNA ends and in intermediate and late gene positive transcription elongation. At the mRNAs 5' end, methylates the ribose 2' OH group of the first transcribed nucleotide, thereby producing a 2'-O-methylpurine cap. At the 3' end, functions as a processivity factor which stimulates the activity of the viral poly(A) polymerase OPG063 that creates mRNA's poly(A) tail. In the presence of OPG102, OPG063 does not dissociate from the RNA allowing tail elongation to around 250 adenylates. In Vaccinia virus (strain Western Reserve) (VACV), this protein is Cap-specific mRNA (nucleoside-2'-O-)-methyltransferase (OPG102).